The primary structure comprises 406 residues: Arginine biosynthesis bifunctional protein ArgJ (406 aa).

Substrate is bound by residues T154, K180, T191, E278, N401, and T406. Catalysis depends on T191, which acts as the Nucleophile.

Belongs to the ArgJ family. As to quaternary structure, heterotetramer of two alpha and two beta chains.

It is found in the cytoplasm. The enzyme catalyses N(2)-acetyl-L-ornithine + L-glutamate = N-acetyl-L-glutamate + L-ornithine. The catalysed reaction is L-glutamate + acetyl-CoA = N-acetyl-L-glutamate + CoA + H(+). The protein operates within amino-acid biosynthesis; L-arginine biosynthesis; L-ornithine and N-acetyl-L-glutamate from L-glutamate and N(2)-acetyl-L-ornithine (cyclic): step 1/1. Its pathway is amino-acid biosynthesis; L-arginine biosynthesis; N(2)-acetyl-L-ornithine from L-glutamate: step 1/4. Catalyzes two activities which are involved in the cyclic version of arginine biosynthesis: the synthesis of N-acetylglutamate from glutamate and acetyl-CoA as the acetyl donor, and of ornithine by transacetylation between N(2)-acetylornithine and glutamate. In Gloeobacter violaceus (strain ATCC 29082 / PCC 7421), this protein is Arginine biosynthesis bifunctional protein ArgJ.